The primary structure comprises 69 residues: Fungal defensin oryzeasin (69 aa).

Positions 1–18 are cleaved as a signal peptide; that stretch reads MKLLTVAFSLLLLGQVHA. Positions 19-26 are excised as a propeptide; sequence SPLVLDKR. Disulfide bonds link C29–C60, C44–C66, and C48–C68.

The protein belongs to the invertebrate defensin family.

The protein localises to the secreted. The protein resides in the target cell membrane. Shows antibacterial activity against numerous Gram-positive bacteria. It selectively inhibits peptidoglycan biosynthesis through complex formation with the cell wall precursor lipid II (1:1 molar ratio) thus inhibiting cell wall synthesis. In Aspergillus oryzae (strain ATCC 42149 / RIB 40) (Yellow koji mold), this protein is Fungal defensin oryzeasin.